A 241-amino-acid polypeptide reads, in one-letter code: MLYKTKAITLYNINYNDNYSIVHVLTEEFGPVSYLTAKFKKQKTHLSKSFFHPLSLVELEVEHKNLREIQYIKEAKTYIPLVSLLNNPIKSSICIFLAEFISKALKEKQSDKLLFNYILQSIQVLEFIEKNYSNFHLVFTIRLSQFLGFYPNNTDYSKGMYFDMQNGIFVQQQPPHTHFVHSDDSWIVAKLLQMNYENMFHFQFTRNERKKIISQILEYYYLHLGGFSKIKSLAILHSVFD.

The protein belongs to the RecO family.

In terms of biological role, involved in DNA repair and RecF pathway recombination. The protein is DNA repair protein RecO of Azobacteroides pseudotrichonymphae genomovar. CFP2.